Reading from the N-terminus, the 243-residue chain is Ribonuclease PH (243 aa).

Phosphate is bound by residues arginine 91 and 129 to 131 (GTR).

Belongs to the RNase PH family. As to quaternary structure, homohexameric ring arranged as a trimer of dimers.

The catalysed reaction is tRNA(n+1) + phosphate = tRNA(n) + a ribonucleoside 5'-diphosphate. Functionally, phosphorolytic 3'-5' exoribonuclease that plays an important role in tRNA 3'-end maturation. Removes nucleotide residues following the 3'-CCA terminus of tRNAs; can also add nucleotides to the ends of RNA molecules by using nucleoside diphosphates as substrates, but this may not be physiologically important. Probably plays a role in initiation of 16S rRNA degradation (leading to ribosome degradation) during starvation. The protein is Ribonuclease PH of Burkholderia pseudomallei (strain 668).